The primary structure comprises 579 residues: Nif-specific regulatory protein (579 aa).

Positions 40–187 (DPVAEVPQIF…MVASLLEQAL (148 aa)) constitute a GAF domain. In terms of domain architecture, Sigma-54 factor interaction spans 226-454 (IVGSSPAIAE…LENCVNRAAA (229 aa)). ATP-binding positions include 254 to 261 (GESGTGKE) and 317 to 326 (ADGGTLFLDE). The segment at 464 to 536 (EELACRQGAC…PLRTKTAQLS (73 aa)) is inter-domain linker. A divalent metal cation-binding residues include Cys-468 and Cys-473. The disordered stretch occupies residues 502 to 529 (RVSAPPPEPAPAPEPAPEAPPREEVPLR). Repeat copies occupy residues 505–506 (AP), 507–508 (PP), 509–510 (EP), 511–512 (AP), 513–514 (AP), 515–516 (EP), and 517–518 (AP). Positions 505 to 518 (APPPEPAPAPEPAP) are 7 X 2 AA tandem repeats of X-P. The segment covering 505-520 (APPPEPAPAPEPAPEA) has biased composition (pro residues). The segment at 537-579 (REELLRALESAGWVQAKAARLLGMTPRQIAYALQKFEIELRKI) is C-terminal DNA-binding domain. The segment at residues 551–570 (QAKAARLLGMTPRQIAYALQ) is a DNA-binding region (H-T-H motif).

In terms of assembly, interacts with sigma-54.

Functionally, required for activation of most nif operons, which are directly involved in nitrogen fixation. The sequence is that of Nif-specific regulatory protein (nifA1) from Rhodobacter capsulatus (strain ATCC BAA-309 / NBRC 16581 / SB1003).